The chain runs to 147 residues: ATP synthase epsilon chain 2 (147 aa).

The protein belongs to the ATPase epsilon chain family. F-type ATPases have 2 components, CF(1) - the catalytic core - and CF(0) - the membrane proton channel. CF(1) has five subunits: alpha(3), beta(3), gamma(1), delta(1), epsilon(1). CF(0) has three main subunits: a, b and c.

Its subcellular location is the cell inner membrane. Functionally, produces ATP from ADP in the presence of a proton gradient across the membrane. This is ATP synthase epsilon chain 2 from Photobacterium profundum (strain SS9).